The primary structure comprises 463 residues: Lactadherin (463 aa).

The first 22 residues, 1–22 (MQVSRVLAALCGMLLCASGLFA), serve as a signal peptide directing secretion. 2 EGF-like domains span residues 24 to 61 (SGDFCDSSLCLNGGTCLTGQDNDIYCLCPEGFTGLVCN) and 64 to 108 (ERGP…IHCE). Cystine bridges form between C28–C39, C33–C49, and C51–C60. Residue N61 is glycosylated (N-linked (GlcNAc...) asparagine). 6 cysteine pairs are disulfide-bonded: C68–C79, C73–C96, C98–C107, C148–C303, C290–C294, and C308–C463. The short motif at 87-89 (RGD) is the Cell attachment site element. F5/8 type C domains are found at residues 148 to 303 (CSTQ…LLGC) and 308 to 463 (CSEP…LLGC). A glycan (N-linked (GlcNAc...) asparagine) is linked at N266. Residues N316 and N426 are each glycosylated (N-linked (GlcNAc...) asparagine).

N-glycosylated. Isoform 1 also exists in both an O-glycosylated and a non-O-glycosylated form. Mammary epithelial cell surfaces and spermatozoan. Isoform 2 is present in brain, heart, kidney and spleen and at low levels in lung, liver, small intestine and testis.

The protein resides in the membrane. Its subcellular location is the secreted. It is found in the cytoplasmic vesicle. The protein localises to the secretory vesicle. It localises to the acrosome membrane. Functionally, contributes to phagocytic removal of apoptotic cells in many tissues. Specific ligand for the alpha-v/beta-3 and alpha-v/beta-5 receptors. Also binds to phosphatidylserine-enriched cell surfaces in a receptor-independent manner. Zona pellucida-binding protein which may play a role in gamete interaction. Plays an important role in the maintenance of intestinal epithelial homeostasis and the promotion of mucosal healing. Promotes VEGF-dependent neovascularization. This is Lactadherin (Mfge8) from Mus musculus (Mouse).